We begin with the raw amino-acid sequence, 597 residues long: Golgin subfamily A member 8C (597 aa).

Disordered regions lie at residues 1-80 and 96-120; these read MAEE…VPDS and KQQKKQVEHQLEEEKKANNEKQKAE. The span at 38–50 shows a compositional bias: polar residues; the sequence is TNGSIHETATSGG. The span at 53 to 70 shows a compositional bias: low complexity; the sequence is SPGDSSSTSSSLHAPQSP. Coiled-coil stretches lie at residues 81–141, 199–255, and 296–394; these read RSVK…NTDL, EWKL…SQEV, and SEVE…GKRL. Over residues 100 to 120 the composition is skewed to basic and acidic residues; sequence KQVEHQLEEEKKANNEKQKAE. Disordered stretches follow at residues 390-422, 457-498, and 549-576; these read LGKRLAHPVASAQKEPEAAVPAPGPGGESSGFM, PITK…GVAA, and PVQGETREGSPHDKPTAQPIVQDHQEHP. The segment covering 470 to 483 has biased composition (gly residues); it reads PGGGHHQAGPGQGG. Basic and acidic residues predominate over residues 553 to 563; it reads ETREGSPHDKP.

Belongs to the GOLGA8 family.

In Homo sapiens (Human), this protein is Golgin subfamily A member 8C (GOLGA8CP).